Consider the following 1141-residue polypeptide: DNA polymerase 120R (1141 aa).

The protein belongs to the DNA polymerase type-B family.

The enzyme catalyses DNA(n) + a 2'-deoxyribonucleoside 5'-triphosphate = DNA(n+1) + diphosphate. In terms of biological role, DNA-directed DNA polymerase involved in viral DNA replication. In Invertebrate iridescent virus 3 (IIV-3), this protein is DNA polymerase 120R.